The following is a 219-amino-acid chain: Thiamine-phosphate synthase (219 aa).

4-amino-2-methyl-5-(diphosphooxymethyl)pyrimidine-binding positions include 48–52 and N84; that span reads QFRQK. Mg(2+)-binding residues include D85 and D104. S123 serves as a coordination point for 4-amino-2-methyl-5-(diphosphooxymethyl)pyrimidine. 150 to 152 provides a ligand contact to 2-[(2R,5Z)-2-carboxy-4-methylthiazol-5(2H)-ylidene]ethyl phosphate; that stretch reads TPS. K153 contributes to the 4-amino-2-methyl-5-(diphosphooxymethyl)pyrimidine binding site. 2-[(2R,5Z)-2-carboxy-4-methylthiazol-5(2H)-ylidene]ethyl phosphate contacts are provided by residues G181 and 199-200; that span reads IS.

Belongs to the thiamine-phosphate synthase family. Mg(2+) serves as cofactor.

The enzyme catalyses 2-[(2R,5Z)-2-carboxy-4-methylthiazol-5(2H)-ylidene]ethyl phosphate + 4-amino-2-methyl-5-(diphosphooxymethyl)pyrimidine + 2 H(+) = thiamine phosphate + CO2 + diphosphate. The catalysed reaction is 2-(2-carboxy-4-methylthiazol-5-yl)ethyl phosphate + 4-amino-2-methyl-5-(diphosphooxymethyl)pyrimidine + 2 H(+) = thiamine phosphate + CO2 + diphosphate. It catalyses the reaction 4-methyl-5-(2-phosphooxyethyl)-thiazole + 4-amino-2-methyl-5-(diphosphooxymethyl)pyrimidine + H(+) = thiamine phosphate + diphosphate. It participates in cofactor biosynthesis; thiamine diphosphate biosynthesis; thiamine phosphate from 4-amino-2-methyl-5-diphosphomethylpyrimidine and 4-methyl-5-(2-phosphoethyl)-thiazole: step 1/1. In terms of biological role, condenses 4-methyl-5-(beta-hydroxyethyl)thiazole monophosphate (THZ-P) and 2-methyl-4-amino-5-hydroxymethyl pyrimidine pyrophosphate (HMP-PP) to form thiamine monophosphate (TMP). This Helicobacter pylori (strain HPAG1) protein is Thiamine-phosphate synthase.